Consider the following 230-residue polypeptide: Probable carboxylesterase Culp2 (230 aa).

The segment at residues 1–32 is a signal peptide (tat-type signal); the sequence is MNDLLTRRLLTMGAAAAMLAAVLLLTPITVPA. Cys45 and Cys112 form a disulfide bridge. Catalysis depends on Ser123, which acts as the Nucleophile. Residues Cys185 and Cys192 are joined by a disulfide bond. Asp189 is an active-site residue. His207 functions as the Proton donor/acceptor in the catalytic mechanism.

This sequence belongs to the cutinase family. Post-translationally, predicted to be exported by the Tat system. The position of the signal peptide cleavage has not been experimentally proven.

It is found in the secreted. Its subcellular location is the cell surface. The polypeptide is Probable carboxylesterase Culp2 (cut2) (Mycobacterium bovis (strain ATCC BAA-935 / AF2122/97)).